Here is a 2225-residue protein sequence, read N- to C-terminus: Multifunctional protein CAD (2225 aa).

A2 carries the post-translational modification N-acetylalanine. The tract at residues 2–365 (AALVLEDGSV…TVKEATAGNP (364 aa)) is GATase (Glutamine amidotransferase). Residues S44, G222, and G224 each contribute to the L-glutamine site. The Glutamine amidotransferase type-1 domain occupies 177–363 (RILALDCGLK…LETVKEATAG (187 aa)). C252 (nucleophile; for GATase activity) is an active-site residue. The L-glutamine site is built by L253, Q256, N294, G296, and F297. Residues H336 and E338 each act as for GATase activity in the active site. Residues 366–394 (GGQTVRERLTERLCPPGIPTPGSGLPPPR) form a linker region. The segment at 395–933 (KVLILGSGGL…TTHDLTFRTP (539 aa)) is CPSase A. The interval 395–1455 (KVLILGSGGL…APPLKVHVDC (1061 aa)) is CPSase (Carbamoyl phosphate synthase). A Phosphothreonine; by MAPK1 modification is found at T456. Residues R515, R555, G561, G562, K592, E599, G625, I626, H627, Q668, and E682 each contribute to the ATP site. The region spanning 519–711 (AARMAEIGEH…LAYVAAKLAL (193 aa)) is the ATP-grasp 1 domain. Mg(2+)-binding residues include Q668, E682, and N684. Mn(2+) contacts are provided by Q668, E682, and N684. K747 carries the N6-acetyllysine modification. Residues 934–1455 (HVLVLGSGVY…APPLKVHVDC (522 aa)) form a CPSase B region. The residue at position 1038 (S1038) is a Phosphoserine. In terms of domain architecture, ATP-grasp 2 spans 1052 to 1243 (SRLLDTIGIS…LVALATRVIM (192 aa)). Positions 1088, 1127, 1129, 1134, 1159, 1160, 1161, 1162, 1202, and 1214 each coordinate ATP. The Mg(2+) site is built by Q1202, E1214, and N1216. Mn(2+) contacts are provided by Q1202, E1214, and N1216. Positions 1308-1462 (FKIPKKNILL…VDCMTSQKLV (155 aa)) constitute an MGS-like domain. S1406 bears the Phosphoserine; by PKA mark. At K1411 the chain carries N6-acetyllysine. A DHOase (dihydroorotase) region spans residues 1456–1788 (MTSQKLVRLP…VKGTVRRVVL (333 aa)). Positions 1471 and 1473 each coordinate Zn(2+). (S)-dihydroorotate is bound by residues R1475 and N1505. Zn(2+)-binding residues include K1556, H1590, C1613, H1614, and E1637. Position 1556 is an N6-carboxylysine (K1556). Residue R1661 coordinates (S)-dihydroorotate. A Zn(2+)-binding site is contributed by D1686. D1686 (for DHOase activity) is an active-site residue. (S)-dihydroorotate is bound by residues H1690 and P1702. The segment at 1789–1917 (RGEVAYIDGQ…GLLHPQTSPL (129 aa)) is linker. Residues 1811 to 1899 (KWPQGAVPQL…YPPPPVPRQA (89 aa)) are disordered. Polar residues predominate over residues 1825–1834 (PATSEMTTTP). S1859 carries the phosphoserine; by RPS6KB1 and PKA modification. The segment covering 1866–1878 (EEPKEKSSRKVAE) has biased composition (basic and acidic residues). At S1873 the chain carries Phosphoserine; by PKC; in vitro. T1884 is modified (phosphothreonine). S1900 and S1938 each carry phosphoserine. The interval 1918 to 2225 (LHSLVGQHIL…ALLATVLGRF (308 aa)) is ATCase (Aspartate transcarbamylase). Carbamoyl phosphate-binding residues include R1975 and T1976. Residue K2003 coordinates L-aspartate. Carbamoyl phosphate is bound by residues R2024, H2052, and Q2055. L-aspartate-binding residues include R2085 and R2146. Positions 2185 and 2186 each coordinate carbamoyl phosphate.

It in the N-terminal section; belongs to the CarA family. In the 2nd section; belongs to the CarB family. This sequence in the 3rd section; belongs to the metallo-dependent hydrolases superfamily. DHOase family. CAD subfamily. The protein in the C-terminal section; belongs to the aspartate/ornithine carbamoyltransferase superfamily. ATCase family. Homohexamer. Interacts with CIPC. Requires Zn(2+) as cofactor. The cofactor is Mg(2+). It depends on Mn(2+) as a cofactor. Activated by MAP kinase (Erk1/2) phosphorylation just prior to the S phase of the cell cycle, when the demand for pyrimidine nucleotides is greatest, and down-regulated as the cells emerge from S phase by protein kinase A (PKA) phosphorylation. Phosphorylation at Ser-1859 by RPS6KB1 downstream of MTOR promotes oligomerization and stimulates dihydroorotase activity. Phosphorylation at Ser-1406 reduces sensitivity to feedback inhibition by UTP.

The protein localises to the cytoplasm. It localises to the nucleus. It carries out the reaction hydrogencarbonate + L-glutamine + 2 ATP + H2O = carbamoyl phosphate + L-glutamate + 2 ADP + phosphate + 2 H(+). The catalysed reaction is L-glutamine + H2O = L-glutamate + NH4(+). It catalyses the reaction hydrogencarbonate + NH4(+) + 2 ATP = carbamoyl phosphate + 2 ADP + phosphate + 2 H(+). The enzyme catalyses carbamoyl phosphate + L-aspartate = N-carbamoyl-L-aspartate + phosphate + H(+). It carries out the reaction (S)-dihydroorotate + H2O = N-carbamoyl-L-aspartate + H(+). The protein operates within pyrimidine metabolism; UMP biosynthesis via de novo pathway; (S)-dihydroorotate from bicarbonate: step 1/3. Its pathway is pyrimidine metabolism; UMP biosynthesis via de novo pathway; (S)-dihydroorotate from bicarbonate: step 2/3. It participates in pyrimidine metabolism; UMP biosynthesis via de novo pathway; (S)-dihydroorotate from bicarbonate: step 3/3. Allosterically regulated and controlled by phosphorylation. 5-phosphoribose 1-diphosphate (PRPP) is an activator while UMP and UTP are inhibitors of the CPSase reaction. Functionally, multifunctional protein that encodes the first 3 enzymatic activities of the de novo pyrimidine pathway: carbamoylphosphate synthetase (CPSase; EC 6.3.5.5), aspartate transcarbamylase (ATCase; EC 2.1.3.2) and dihydroorotase (DHOase; EC 3.5.2.3). The CPSase-function is accomplished in 2 steps, by a glutamine-dependent amidotransferase activity (GATase) that binds and cleaves glutamine to produce ammonia, followed by an ammonium-dependent carbamoyl phosphate synthetase, which reacts with the ammonia, hydrogencarbonate and ATP to form carbamoyl phosphate. The endogenously produced carbamoyl phosphate is sequestered and channeled to the ATCase active site. ATCase then catalyzes the formation of carbamoyl-L-aspartate from L-aspartate and carbamoyl phosphate. In the last step, DHOase catalyzes the cyclization of carbamoyl aspartate to dihydroorotate. The polypeptide is Multifunctional protein CAD (Homo sapiens (Human)).